The primary structure comprises 237 residues: Sugar fermentation stimulation protein homolog (237 aa).

This sequence belongs to the SfsA family.

This chain is Sugar fermentation stimulation protein homolog, found in Pseudomonas savastanoi pv. phaseolicola (strain 1448A / Race 6) (Pseudomonas syringae pv. phaseolicola (strain 1448A / Race 6)).